Consider the following 119-residue polypeptide: Phosphoribosyl-AMP cyclohydrolase (119 aa).

Residue aspartate 77 participates in Mg(2+) binding. Residue cysteine 78 coordinates Zn(2+). Aspartate 79 and aspartate 81 together coordinate Mg(2+). Zn(2+) is bound by residues cysteine 94 and cysteine 101.

It belongs to the PRA-CH family. As to quaternary structure, homodimer. Mg(2+) serves as cofactor. Zn(2+) is required as a cofactor.

The protein localises to the cytoplasm. The enzyme catalyses 1-(5-phospho-beta-D-ribosyl)-5'-AMP + H2O = 1-(5-phospho-beta-D-ribosyl)-5-[(5-phospho-beta-D-ribosylamino)methylideneamino]imidazole-4-carboxamide. It functions in the pathway amino-acid biosynthesis; L-histidine biosynthesis; L-histidine from 5-phospho-alpha-D-ribose 1-diphosphate: step 3/9. Its function is as follows. Catalyzes the hydrolysis of the adenine ring of phosphoribosyl-AMP. The chain is Phosphoribosyl-AMP cyclohydrolase from Dinoroseobacter shibae (strain DSM 16493 / NCIMB 14021 / DFL 12).